The primary structure comprises 469 residues: Sorting and assembly machinery component 50 homolog (469 aa).

One can recognise a POTRA domain in the interval 45-125 (VVVQHVHFDG…LDVTFEVTEL (81 aa)). K255 is subject to N6-methyllysine.

It belongs to the SAM50/omp85 family. In terms of assembly, associates with the mitochondrial contact site and cristae organizing system (MICOS) complex, composed of at least MICOS10/MIC10, CHCHD3/MIC19, CHCHD6/MIC25, APOOL/MIC27, IMMT/MIC60, APOO/MIC23/MIC26 and QIL1/MIC13. This complex was also known under the names MINOS or MitOS complex. The MICOS complex associates with mitochondrial outer membrane proteins SAMM50, MTX1 and MTX2 (together described as components of the mitochondrial outer membrane sorting assembly machinery (SAM) complex) and DNAJC11, mitochondrial inner membrane protein TMEM11 and with HSPA9. The MICOS and SAM complexes together with DNAJC11 are part of a large protein complex spanning both membranes termed the mitochondrial intermembrane space bridging (MIB) complex. Interacts with IMMT/MIC60. Interacts with CHCHD3/MIC19. Interacts with ARMC1.

It is found in the mitochondrion outer membrane. It localises to the cytoplasm. Its subcellular location is the mitochondrion. In terms of biological role, plays a crucial role in the maintenance of the structure of mitochondrial cristae and the proper assembly of the mitochondrial respiratory chain complexes. Required for the assembly of TOMM40 into the TOM complex. This chain is Sorting and assembly machinery component 50 homolog (SAMM50), found in Bos taurus (Bovine).